The sequence spans 508 residues: Steroid 17-alpha-hydroxylase/17,20 lyase (508 aa).

Position 445 (cysteine 445) interacts with heme.

The protein belongs to the cytochrome P450 family. Heme is required as a cofactor.

It localises to the membrane. The catalysed reaction is a C21-steroid + reduced [NADPH--hemoprotein reductase] + O2 = a 17alpha-hydroxy-C21-steroid + oxidized [NADPH--hemoprotein reductase] + H2O + H(+). It carries out the reaction 17alpha-hydroxyprogesterone + reduced [NADPH--hemoprotein reductase] + O2 = androst-4-ene-3,17-dione + acetate + oxidized [NADPH--hemoprotein reductase] + H2O + 2 H(+). It catalyses the reaction 17alpha-hydroxypregnenolone + reduced [NADPH--hemoprotein reductase] + O2 = 3beta-hydroxyandrost-5-en-17-one + acetate + oxidized [NADPH--hemoprotein reductase] + H2O + 2 H(+). Its pathway is lipid metabolism; steroid biosynthesis. Its function is as follows. Conversion of pregnenolone and progesterone to their 17-alpha-hydroxylated products and subsequently to dehydroepiandrosterone (DHEA) and androstenedione. Catalyzes both the 17-alpha-hydroxylation and the 17,20-lyase reaction. The protein is Steroid 17-alpha-hydroxylase/17,20 lyase (CYP17A1) of Gallus gallus (Chicken).